We begin with the raw amino-acid sequence, 840 residues long: Mechanosensitive ion channel protein Msy2 (840 aa).

The Cytoplasmic segment spans residues methionine 1–arginine 68. The chain crosses the membrane as a helical span at residues tryptophan 69–serine 89. The Lumenal segment spans residues proline 90–arginine 100. Residues isoleucine 101 to isoleucine 121 form a helical membrane-spanning segment. At alanine 122–proline 126 the chain is on the cytoplasmic side. Residues tyrosine 127 to leucine 147 traverse the membrane as a helical segment. The Lumenal portion of the chain corresponds to threonine 148–glutamate 151. The chain crosses the membrane as a helical span at residues methionine 152 to isoleucine 172. The Cytoplasmic segment spans residues glycine 173–glycine 225. The helical transmembrane segment at alanine 226–phenylalanine 246 threads the bilayer. Residues histidine 247–glycine 449 are Lumenal-facing. The EF-hand domain maps to isoleucine 392–glutamate 427. Residues leucine 450 to alanine 491 traverse the membrane as a helical segment. Residues glutamine 492 to tyrosine 840 lie on the Cytoplasmic side of the membrane. Disordered regions lie at residues glutamate 677–aspartate 730 and glutamate 775–alanine 819. Positions serine 688–serine 700 are enriched in low complexity. Over residues serine 708–aspartate 730 the composition is skewed to basic and acidic residues. Residues serine 776–alanine 819 show a composition bias toward low complexity.

It belongs to the MscS (TC 1.A.23) family.

The protein localises to the endoplasmic reticulum membrane. Functionally, regulates intracellular calcium levels and cell volume for survival in response to hypo-osmotic shock. Involved in maintaining vacuole integrity and protecting the nuclear envelope upon hypo-osmotic shock. The sequence is that of Mechanosensitive ion channel protein Msy2 from Schizosaccharomyces pombe (strain 972 / ATCC 24843) (Fission yeast).